A 593-amino-acid polypeptide reads, in one-letter code: Proline dehydrogenase 1, mitochondrial (593 aa).

Residues 24–44 form a disordered region; that stretch reads PAAREQPAAGPGAEPVCGPAE. Residues lysine 368 and lysine 479 each carry the N6-acetyllysine modification.

It belongs to the proline oxidase family. It depends on FAD as a cofactor.

The protein resides in the mitochondrion matrix. It catalyses the reaction L-proline + a quinone = (S)-1-pyrroline-5-carboxylate + a quinol + H(+). Its pathway is amino-acid degradation; L-proline degradation into L-glutamate; L-glutamate from L-proline: step 1/2. In terms of biological role, converts proline to delta-1-pyrroline-5-carboxylate. This Bos taurus (Bovine) protein is Proline dehydrogenase 1, mitochondrial.